A 313-amino-acid polypeptide reads, in one-letter code: Porphobilinogen deaminase (313 aa).

At Cys-242 the chain carries S-(dipyrrolylmethanemethyl)cysteine.

Belongs to the HMBS family. In terms of assembly, monomer. Requires dipyrromethane as cofactor.

It carries out the reaction 4 porphobilinogen + H2O = hydroxymethylbilane + 4 NH4(+). Its pathway is porphyrin-containing compound metabolism; protoporphyrin-IX biosynthesis; coproporphyrinogen-III from 5-aminolevulinate: step 2/4. Tetrapolymerization of the monopyrrole PBG into the hydroxymethylbilane pre-uroporphyrinogen in several discrete steps. The polypeptide is Porphobilinogen deaminase (Yersinia pseudotuberculosis serotype IB (strain PB1/+)).